A 331-amino-acid polypeptide reads, in one-letter code: Adenosine deaminase (331 aa).

Zn(2+) contacts are provided by histidine 12 and histidine 14. Substrate is bound by residues histidine 14, aspartate 16, and glycine 170. Histidine 197 contributes to the Zn(2+) binding site. Glutamate 200 acts as the Proton donor in catalysis. Aspartate 278 provides a ligand contact to Zn(2+). Aspartate 279 contributes to the substrate binding site.

It belongs to the metallo-dependent hydrolases superfamily. Adenosine and AMP deaminases family. Adenosine deaminase subfamily. The cofactor is Zn(2+).

The enzyme catalyses adenosine + H2O + H(+) = inosine + NH4(+). It carries out the reaction 2'-deoxyadenosine + H2O + H(+) = 2'-deoxyinosine + NH4(+). In terms of biological role, catalyzes the hydrolytic deamination of adenosine and 2-deoxyadenosine. This is Adenosine deaminase from Shewanella sp. (strain W3-18-1).